The sequence spans 872 residues: Extended synaptotagmin-2-A (872 aa).

Residues 1–25 (MSSESSAEKGPPPSPAENVQPGVPP) are disordered. Over 1-31 (MSSESSAEKGPPPSPAENVQPGVPPAAEEPG) the chain is Cytoplasmic. A helical transmembrane segment spans residues 32–52 (MISVDIAGLFYQFSKTFILIF). Residues 53–55 (PVY) are Lumenal-facing. The helical transmembrane segment at 56–76 (VLGYFGLSFSWLLIALVLLLW) threads the bilayer. Topologically, residues 77–872 (WRRNKGNKNS…EDGTRPAVSS (796 aa)) are cytoplasmic. The SMP-LTD domain maps to 119 to 298 (DIERAEWLNK…LPNRITVPLV (180 aa)). C2 domains follow at residues 297–417 (LVSD…DEWF) and 442–588 (NLDQ…HLNN). 9 residues coordinate Ca(2+): Lys328, Asp329, Asp341, Asp388, Glu389, Asp390, Asp392, Asp394, and Asp395. Over residues 608–617 (KPVRSPDEQH) the composition is skewed to basic and acidic residues. Residues 608–711 (KPVRSPDEQH…EPTPSIASDI (104 aa)) form a disordered region. Residues 632–652 (PPTPQMPSPSPAVAHKPPPTP) show a composition bias toward pro residues. Residues 664-681 (NKGTPPSASPKSPTELHQ) show a composition bias toward polar residues. Residues 682–696 (SSSSLSGSSFTYSPS) are compositionally biased toward low complexity. One can recognise a C2 3 domain in the interval 737–859 (PLGQIQLTIR…DAAKGWTQWY (123 aa)). The interval 784–791 (KRRSGRRK) is required for phosphatidylinositol 4,5-bisphosphate-dependent location at the cell membrane.

It belongs to the extended synaptotagmin family. In terms of assembly, interacts with fgfr1 that has been activated by fgf1 binding. Interacts (via C2 domains) with the AP-2 complex (via an alpha subunit). Identified in a complex with the AP-2 complex and fgfr1.

It is found in the cell membrane. The protein localises to the endoplasmic reticulum membrane. Functionally, tethers the endoplasmic reticulum to the cell membrane and promotes the formation of appositions between the endoplasmic reticulum and the cell membrane. Binds glycerophospholipids in a barrel-like domain and may play a role in cellular lipid transport. Plays a role in the rapid internalization of fgfr1 that has been activated by fgf1 binding; this occurs most likely via the AP-2 complex. Required for normal fgf signaling and the activation of downstream signaling cascades via its role in the internalization of activated fgfr1. Required for normal embryonic development via its role in fgf signaling and the downstream regulation of t/xBRA expression. The polypeptide is Extended synaptotagmin-2-A (esyt2-a) (Xenopus laevis (African clawed frog)).